A 394-amino-acid polypeptide reads, in one-letter code: Succinate--CoA ligase [ADP-forming] subunit beta (394 aa).

ATP-binding positions include Lys46, 53-55 (GRG), Glu99, Cys102, and Glu107. 2 residues coordinate Mg(2+): Asn199 and Asp213. Substrate contacts are provided by residues Asn264 and 321–323 (GIV).

Belongs to the succinate/malate CoA ligase beta subunit family. In terms of assembly, heterotetramer of two alpha and two beta subunits. It depends on Mg(2+) as a cofactor.

The catalysed reaction is succinate + ATP + CoA = succinyl-CoA + ADP + phosphate. It carries out the reaction GTP + succinate + CoA = succinyl-CoA + GDP + phosphate. It functions in the pathway carbohydrate metabolism; tricarboxylic acid cycle; succinate from succinyl-CoA (ligase route): step 1/1. Its function is as follows. Succinyl-CoA synthetase functions in the citric acid cycle (TCA), coupling the hydrolysis of succinyl-CoA to the synthesis of either ATP or GTP and thus represents the only step of substrate-level phosphorylation in the TCA. The beta subunit provides nucleotide specificity of the enzyme and binds the substrate succinate, while the binding sites for coenzyme A and phosphate are found in the alpha subunit. In Haemophilus influenzae (strain PittGG), this protein is Succinate--CoA ligase [ADP-forming] subunit beta.